Consider the following 311-residue polypeptide: Protoheme IX farnesyltransferase 1 (311 aa).

9 helical membrane passes run 31 to 51 (VMAL…GAVN), 52 to 72 (PVIA…AGAL), 97 to 117 (VTPG…VMTL), 119 to 139 (VLVG…YIVI), 152 to 172 (IVIG…AATG), 179 to 199 (LVLF…LALF), 225 to 245 (ILAY…FGFT), 247 to 267 (GYYG…SWKV), and 281 to 301 (LFAY…ADTI).

The protein belongs to the UbiA prenyltransferase family. Protoheme IX farnesyltransferase subfamily.

It localises to the cell inner membrane. It carries out the reaction heme b + (2E,6E)-farnesyl diphosphate + H2O = Fe(II)-heme o + diphosphate. The protein operates within porphyrin-containing compound metabolism; heme O biosynthesis; heme O from protoheme: step 1/1. Its function is as follows. Converts heme B (protoheme IX) to heme O by substitution of the vinyl group on carbon 2 of heme B porphyrin ring with a hydroxyethyl farnesyl side group. The chain is Protoheme IX farnesyltransferase 1 from Mesorhizobium japonicum (strain LMG 29417 / CECT 9101 / MAFF 303099) (Mesorhizobium loti (strain MAFF 303099)).